The primary structure comprises 31 residues: Cyclotide vpub-A (31 aa).

The segment at residues 1-31 (GVIPCGESCVFIPCISAVIGCSCKSKVCYRN) is a cross-link (cyclopeptide (Gly-Asn)). 3 disulfide bridges follow: cysteine 5–cysteine 21, cysteine 9–cysteine 23, and cysteine 14–cysteine 28.

This sequence belongs to the cyclotide family. Bracelet subfamily. Post-translationally, this is a cyclic peptide.

Its function is as follows. Probably participates in a plant defense mechanism. The sequence is that of Cyclotide vpub-A from Viola pubescens (Downy yellow violet).